Here is a 333-residue protein sequence, read N- to C-terminus: Endo-1,4-beta-xylanase (333 aa).

The signal sequence occupies residues 1–17; it reads MYLVAFMLLAILPTGYC. The GH10 domain occupies 18 to 330; the sequence is QLNTLAVRAG…KPAYQGIVDG (313 aa). Residue Glu-147 is the Proton donor of the active site. Glu-252 functions as the Nucleophile in the catalytic mechanism.

This sequence belongs to the glycosyl hydrolase 10 (cellulase F) family.

Its subcellular location is the secreted. It carries out the reaction Endohydrolysis of (1-&gt;4)-beta-D-xylosidic linkages in xylans.. Its pathway is glycan degradation; xylan degradation. In terms of biological role, has xylanase activity. Seems to be involved in the release of sugars from the hemicellulolytic fraction in the compost. This chain is Endo-1,4-beta-xylanase (xlnA), found in Agaricus bisporus (White button mushroom).